The chain runs to 715 residues: ATP-binding cassette sub-family B member 10, mitochondrial (715 aa).

A mitochondrion-targeting transit peptide spans Met-1–Leu-82. Residues Ala-83–Arg-133 lie on the Mitochondrial matrix side of the membrane. Residues Gly-134–Leu-157 traverse the membrane as a helical segment. The ABC transmembrane type-1 domain occupies Leu-136–Lys-422. Residues Gly-158–Arg-178 are Mitochondrial intermembrane-facing. Residues Leu-179–Met-201 traverse the membrane as a helical segment. Over Gln-202–Thr-252 the chain is Mitochondrial matrix. Lys-230 carries the N6-acetyllysine modification. A helical membrane pass occupies residues Glu-253–Val-275. Topologically, residues Ser-276 to Ser-278 are mitochondrial intermembrane. The helical transmembrane segment at Leu-279–Gly-298 threads the bilayer. Residues Arg-299 to Ala-357 lie on the Mitochondrial matrix side of the membrane. The helical transmembrane segment at Leu-358 to Lys-381 threads the bilayer. The Mitochondrial intermembrane portion of the chain corresponds to Gly-382 to Glu-395. The chain crosses the membrane as a helical span at residues Leu-396 to Tyr-417. At Ser-418–Ala-715 the chain is on the mitochondrial matrix side. The ABC transporter domain occupies Leu-457–Asn-696. Gly-495, Gly-497, Lys-498, Ser-499, and Thr-500 together coordinate ATP. A Mg(2+)-binding site is contributed by Ser-499. The residue at position 547 (Cys-547) is an S-glutathionyl cysteine. Asp-623 contacts Mg(2+).

Belongs to the ABC transporter superfamily. ABCB family. Mitochondrial peptide exporter (TC 3.A.1.212) subfamily. Homodimer or homooligomer. Interacts with PAAT; this interaction regulates ABCB10. Interacts with SLC25A37; this interaction stabilizes SLC25A37 and enhances the function of SLC25A37 to import mitochondrial iron during erythroid differentiation. Interacts with FECH; this interaction may allow the formation of the oligomeric complex with SLC25A37. Forms a complex with ABCB7 and FECH, where a dimeric FECH bridges ABCB7 and ABCB10 homodimers; this complex may be required for cellular iron homeostasis, mitochondrial function and heme biosynthesis. Expressed at particularly high levels in fetal liver, and erythroid tissues of embryos and adults. Found also in adult bone marrow, liver and kidney, and at lower levels in heart, brain and spleen.

It is found in the mitochondrion inner membrane. The enzyme catalyses biliverdin IXalpha(in) + ATP + H2O = biliverdin IXalpha(out) + ADP + phosphate + H(+). Its activity is regulated as follows. Oxidized glutathione (GSSG) stimulates ATP hydrolysis without affecting ATP binding, whereas reduced glutathione (GSH) inhibits ATP binding and hydrolysis. ATP-dependent transporter located in the mitochondrial inner membrane that catalyzes the export of biliverdin from the mitochondrial matrix, and plays a crucial role in hemoglobin synthesis and antioxidative stress. Participates in the early step of the heme biosynthetic process during insertion of iron into protoporphyrin IX (PPIX). Involved in the stabilization of the iron transporter mitoferrin-1/SLC25A37. In addition may be involved in mitochondrial unfolded protein response (UPRmt) signaling pathway, although ABCB10 probably does not participate in peptide export from mitochondria. This is ATP-binding cassette sub-family B member 10, mitochondrial from Mus musculus (Mouse).